The primary structure comprises 239 residues: Transcriptional regulatory protein BtsR (239 aa).

The Response regulatory domain maps to 3–116 (KVLIVDDEPL…RLEKTLHRLR (114 aa)). Asp-54 carries the post-translational modification 4-aspartylphosphate. Residues 137–239 (IPCTGHSRIY…LKSLKEAIGL (103 aa)) enclose the HTH LytTR-type domain.

Post-translationally, phosphorylated by BtsS.

In terms of biological role, member of the two-component regulatory system BtsS/BtsR. BtsR regulates expression of btsT by binding to its promoter region. The sequence is that of Transcriptional regulatory protein BtsR from Salmonella typhimurium (strain LT2 / SGSC1412 / ATCC 700720).